The sequence spans 182 residues: Fatty-acid and retinol-binding protein 2 (182 aa).

Residues 1–17 (MIRAFLVVALASVAVFS) form the signal peptide. Coiled-coil stretches lie at residues 46-73 (LKAITAEEKAALKELAQNHKEYKTEEEF) and 131-152 (TLDSLKELAKGYIAEYKALSDD).

It belongs to the fatty-acid and retinol-binding protein (FARBP) family.

It is found in the secreted. Functionally, probably binds lipids. The polypeptide is Fatty-acid and retinol-binding protein 2 (far-2) (Caenorhabditis elegans).